Here is a 320-residue protein sequence, read N- to C-terminus: GRAM domain-containing protein 2A (320 aa).

Residues 33 to 56 are disordered; that stretch reads TEKPGKVQEPPDDGSLHWSEGSKG. The GRAM domain maps to 74-141; that stretch reads QQYHKLFKDI…VSVQLIKKHK (68 aa). A helical transmembrane segment spans residues 278–298; that stretch reads LLKVIFVMICFLVLSSSYLAF.

Post-translationally, phosphorylated.

The protein resides in the endoplasmic reticulum membrane. It localises to the cell membrane. Functionally, participates in the organization ofendoplasmic reticulum-plasma membrane contact sites (EPCS) with pleiotropic functions including STIM1 recruitment and calcium homeostasis. Constitutive tether that co-localize with ESYT2/3 tethers at endoplasmic reticulum-plasma membrane contact sites in a phosphatidylinositol lipid-dependent manner. Pre-marks the subset of phosphtidylinositol 4,5-biphosphate (PI(4,5)P2)-enriched EPCS destined for the store operated calcium entry pathway (SOCE). This Mus musculus (Mouse) protein is GRAM domain-containing protein 2A.